The following is a 417-amino-acid chain: Serine hydroxymethyltransferase (417 aa).

Residues L112 and 116-118 (GHL) contribute to the (6S)-5,6,7,8-tetrahydrofolate site. The residue at position 221 (K221) is an N6-(pyridoxal phosphate)lysine. A (6S)-5,6,7,8-tetrahydrofolate-binding site is contributed by E247.

This sequence belongs to the SHMT family. In terms of assembly, homodimer. It depends on pyridoxal 5'-phosphate as a cofactor.

It localises to the cytoplasm. The enzyme catalyses (6R)-5,10-methylene-5,6,7,8-tetrahydrofolate + glycine + H2O = (6S)-5,6,7,8-tetrahydrofolate + L-serine. Its pathway is one-carbon metabolism; tetrahydrofolate interconversion. It functions in the pathway amino-acid biosynthesis; glycine biosynthesis; glycine from L-serine: step 1/1. Functionally, catalyzes the reversible interconversion of serine and glycine with tetrahydrofolate (THF) serving as the one-carbon carrier. This reaction serves as the major source of one-carbon groups required for the biosynthesis of purines, thymidylate, methionine, and other important biomolecules. Also exhibits THF-independent aldolase activity toward beta-hydroxyamino acids, producing glycine and aldehydes, via a retro-aldol mechanism. This Borrelia recurrentis (strain A1) protein is Serine hydroxymethyltransferase.